Reading from the N-terminus, the 288-residue chain is Homoserine kinase (288 aa).

79–89 (PPARGLGSSSA) lines the ATP pocket.

The protein belongs to the GHMP kinase family. Homoserine kinase subfamily.

It is found in the cytoplasm. It catalyses the reaction L-homoserine + ATP = O-phospho-L-homoserine + ADP + H(+). Its pathway is amino-acid biosynthesis; L-threonine biosynthesis; L-threonine from L-aspartate: step 4/5. Functionally, catalyzes the ATP-dependent phosphorylation of L-homoserine to L-homoserine phosphate. This is Homoserine kinase from Listeria monocytogenes serotype 4a (strain HCC23).